Here is a 178-residue protein sequence, read N- to C-terminus: Arginine repressor (178 aa).

A disordered region spans residues 1–21 (MSQAQENEHAGPAVPQTRTAR).

It belongs to the ArgR family.

It localises to the cytoplasm. The protein operates within amino-acid biosynthesis; L-arginine biosynthesis [regulation]. In terms of biological role, regulates arginine biosynthesis genes. The chain is Arginine repressor from Streptomyces avermitilis (strain ATCC 31267 / DSM 46492 / JCM 5070 / NBRC 14893 / NCIMB 12804 / NRRL 8165 / MA-4680).